A 191-amino-acid chain; its full sequence is Cell division protein SepF (191 aa).

The tract at residues 1 to 77 (MEGQDDYQLL…MGSNVIGLPG (77 aa)) is disordered.

Belongs to the SepF family. Homodimer. Interacts with FtsZ.

It localises to the cytoplasm. Its function is as follows. Cell division protein that is part of the divisome complex and is recruited early to the Z-ring. Probably stimulates Z-ring formation, perhaps through the cross-linking of FtsZ protofilaments. Its function overlaps with FtsA. This Synechococcus sp. (strain JA-2-3B'a(2-13)) (Cyanobacteria bacterium Yellowstone B-Prime) protein is Cell division protein SepF.